A 36-amino-acid chain; its full sequence is Esculentin-2R (36 aa).

A disulfide bond links cysteine 30 and cysteine 36.

In terms of tissue distribution, expressed by the skin glands.

Its subcellular location is the secreted. Antimicrobial peptide. In Pelophylax ridibundus (Marsh frog), this protein is Esculentin-2R.